The sequence spans 160 residues: C-type lectin mosGCTL-1 (160 aa).

The first 20 residues, 1 to 20 (MLTKGITLILLLVLVHSSHG), serve as a signal peptide directing secretion. The C-type lectin domain occupies 23 to 140 (TPNRKFYIPS…YHWSWNDNTC (118 aa)). 2 disulfides stabilise this stretch: C44–C140 and C120–C140. N76 carries N-linked (GlcNAc...) asparagine glycosylation.

In terms of assembly, interacts with putative receptor-type tyrosine-protein phosphatase mosPTP-1; the interaction probably mediates the recruitment of West Nile virus particles in complex with C-type lectin mosGCTL-1 to the cell surface. As to quaternary structure, (Microbial infection) Interacts with envelope protein E and virions of West Nile virus in a calcium-dependent manner. Female salivary gland (at protein level).

It is found in the secreted. Functionally, putative lectin. (Microbial infection) Facilitates West Nile virus infection in mosquitoes probably via capturing viral particles and presenting them to a ligand on the cell surface, thereby facilitating viral entry. This is C-type lectin mosGCTL-1 from Aedes aegypti (Yellowfever mosquito).